Here is a 342-residue protein sequence, read N- to C-terminus: uncharacterized protein (342 aa).

9-31 (LIFGGTTGIGLMTTIDFIIHNTS) lines the NADP(+) pocket. Ser208 is a substrate binding site. Catalysis depends on Tyr222, which acts as the Proton acceptor.

The protein belongs to the short-chain dehydrogenases/reductases (SDR) family.

This is an uncharacterized protein from Acanthamoeba polyphaga (Amoeba).